The primary structure comprises 292 residues: Elongation factor Ts (292 aa).

The segment at 80 to 83 (TDFV) is involved in Mg(2+) ion dislocation from EF-Tu.

Belongs to the EF-Ts family.

It is found in the cytoplasm. Its function is as follows. Associates with the EF-Tu.GDP complex and induces the exchange of GDP to GTP. It remains bound to the aminoacyl-tRNA.EF-Tu.GTP complex up to the GTP hydrolysis stage on the ribosome. The polypeptide is Elongation factor Ts (Cupriavidus pinatubonensis (strain JMP 134 / LMG 1197) (Cupriavidus necator (strain JMP 134))).